Consider the following 314-residue polypeptide: Oxaloacetate tautomerase FAHD2A, mitochondrial (314 aa).

A mitochondrion-targeting transit peptide spans 1–84 (MLGSSGRRLL…ATLSVVRRAL (84 aa)). Mg(2+) is bound by residues Glu159, Glu161, and Asp190.

Belongs to the FAH family. Requires Mg(2+) as cofactor. The cofactor is Mn(2+).

It is found in the mitochondrion. The catalysed reaction is oxaloacetate = enol-oxaloacetate. In terms of biological role, tautomerase that converts enol-oxaloacetate, a strong inhibitor of succinate dehydrogenase, to the physiological keto form of oxaloacetate. It is thereby required to maximize aerobic respiration efficiency by preventing succinate dehydrogenase inhibition. In Bos taurus (Bovine), this protein is Oxaloacetate tautomerase FAHD2A, mitochondrial.